The sequence spans 468 residues: GTPase Der (468 aa).

2 consecutive EngA-type G domains span residues 3–169 and 199–372; these read PVMA…SPPD and IRLA…KAAT. Residues 9–16, 56–60, 119–122, 205–212, 252–256, and 317–320 contribute to the GTP site; these read GRANVGKS, DTGGF, NKAE, GRPNVGKS, DTAGL, and NKWD. A KH-like domain is found at 373-457; it reads CKMSTPVLTR…PLRIELKTSH (85 aa).

Belongs to the TRAFAC class TrmE-Era-EngA-EngB-Septin-like GTPase superfamily. EngA (Der) GTPase family. Associates with the 50S ribosomal subunit.

Functionally, GTPase that plays an essential role in the late steps of ribosome biogenesis. This chain is GTPase Der, found in Verminephrobacter eiseniae (strain EF01-2).